A 260-amino-acid polypeptide reads, in one-letter code: 5'-nucleotidase SurE (260 aa).

Positions 8, 9, 43, and 96 each coordinate a divalent metal cation.

The protein belongs to the SurE nucleotidase family. A divalent metal cation serves as cofactor.

The protein resides in the cytoplasm. The enzyme catalyses a ribonucleoside 5'-phosphate + H2O = a ribonucleoside + phosphate. Functionally, nucleotidase that shows phosphatase activity on nucleoside 5'-monophosphates. This is 5'-nucleotidase SurE from Ruegeria sp. (strain TM1040) (Silicibacter sp.).